A 457-amino-acid chain; its full sequence is Proline-specific permease ProY (457 aa).

Residues 1-17 (MESKNKLKRGLSTRHIR) are Cytoplasmic-facing. A run of 2 helical transmembrane segments spans residues 18–38 (FMALGSAIGTGLFYGSADAIK) and 39–59 (MAGPSVLLAYIIGGIAAYIIM). At 60–84 (RALGEMSVHNPAASSFSRYAQENLG) the chain is on the cytoplasmic side. Residues 85–105 (PLAGYITGWTYCFEILIVAIA) form a helical membrane-spanning segment. Over 106–113 (DVTAFGIY) the chain is Periplasmic. Residues 114–134 (MGVWFPTVPHWIWVLSVVLII) form a helical membrane-spanning segment. Over 135 to 156 (CAVNLMSVKVFGELEFWFSFFK) the chain is Cytoplasmic. The chain crosses the membrane as a helical span at residues 157-177 (VATIIIMIVAGFGIIIWGIGN). Residues 178–197 (GGQPTGIHNLWSNGGFFSNG) lie on the Periplasmic side of the membrane. Residues 198–218 (WLGMVMSLQMVMFAYGGIEII) form a helical membrane-spanning segment. Residues 219-242 (GITAGEAKDPEKSIPRAINSVPMR) are Cytoplasmic-facing. The helical transmembrane segment at 243–263 (ILVFYVGTLFVIMSIYPWNQV) threads the bilayer. The Periplasmic segment spans residues 264–277 (GTAGSPFVLTFQHM). The helical transmembrane segment at 278–298 (GITFAASILNFVVLTASLSAI) threads the bilayer. Residues 299-331 (NSDVFGVGRMLHGMAEQGSAPKIFSKTSRRGIP) lie on the Cytoplasmic side of the membrane. Residues 332–352 (WVTVLVMTTALLFAVYLNYIM) traverse the membrane as a helical segment. At 353 to 355 (PEN) the chain is on the periplasmic side. A helical transmembrane segment spans residues 356–376 (VFLVIASLATFATVWVWIMIL). Over 377–399 (LSQIAFRRRLPPEEVKALKFKVP) the chain is Cytoplasmic. The chain crosses the membrane as a helical span at residues 400–420 (GGVATTIGGLIFLLFIIGLIG). Residues 421 to 424 (YHPD) lie on the Periplasmic side of the membrane. The helical transmembrane segment at 425 to 445 (TRISLYVGFAWIVVLLIGWMF) threads the bilayer. Residues 446 to 457 (KRRHDRQLAENQ) are Cytoplasmic-facing.

The protein belongs to the amino acid-polyamine-organocation (APC) superfamily. Amino acid transporter (AAT) (TC 2.A.3.1) family.

Its subcellular location is the cell inner membrane. Functionally, permease that is involved in the transport across the cytoplasmic membrane of proline. In Escherichia coli O157:H7, this protein is Proline-specific permease ProY (proY).